The following is a 229-amino-acid chain: Potassium/proton antiporter CemA (229 aa).

4 helical membrane-spanning segments follow: residues 7–27, 106–126, 154–174, and 189–209; these read LASL…SLSF, IILH…YFFL, ILLV…ELMI, and IISG…KYWI.

The protein belongs to the CemA family.

It is found in the plastid. Its subcellular location is the chloroplast inner membrane. It catalyses the reaction K(+)(in) + H(+)(out) = K(+)(out) + H(+)(in). Contributes to K(+)/H(+) antiport activity by supporting proton efflux to control proton extrusion and homeostasis in chloroplasts in a light-dependent manner to modulate photosynthesis. Prevents excessive induction of non-photochemical quenching (NPQ) under continuous-light conditions. Indirectly promotes efficient inorganic carbon uptake into chloroplasts. In Phalaenopsis aphrodite subsp. formosana (Moth orchid), this protein is Potassium/proton antiporter CemA.